We begin with the raw amino-acid sequence, 363 residues long: Small ribosomal subunit biogenesis GTPase RsgA (363 aa).

The 157-residue stretch at 112–268 (HQQVIAANID…LIDTPGMREL (157 aa)) folds into the CP-type G domain. Residues 157-160 (TKAD) and 210-218 (GSSGAGKST) contribute to the GTP site. Zn(2+) contacts are provided by cysteine 291, cysteine 296, histidine 298, and cysteine 304. The segment at 340–363 (RVAQNNRGKGSGKRPASVDRPGRR) is disordered.

The protein belongs to the TRAFAC class YlqF/YawG GTPase family. RsgA subfamily. Monomer. Associates with 30S ribosomal subunit, binds 16S rRNA. It depends on Zn(2+) as a cofactor.

Its subcellular location is the cytoplasm. One of several proteins that assist in the late maturation steps of the functional core of the 30S ribosomal subunit. Helps release RbfA from mature subunits. May play a role in the assembly of ribosomal proteins into the subunit. Circularly permuted GTPase that catalyzes slow GTP hydrolysis, GTPase activity is stimulated by the 30S ribosomal subunit. The polypeptide is Small ribosomal subunit biogenesis GTPase RsgA (Xanthomonas euvesicatoria pv. vesicatoria (strain 85-10) (Xanthomonas campestris pv. vesicatoria)).